The primary structure comprises 155 residues: Cardio acceleratory peptide 2b (155 aa).

Positions 1-26 are cleaved as a signal peptide; the sequence is MKAIFSLYNIVSAILLLVLLAEFSTA. Residues 27-33 constitute a propeptide that is removed on maturation; that stretch reads ELNHDKN. Valine 47 bears the Valine amide mark. Residues 50–85 constitute a propeptide that is removed on maturation; it reads SDPSLANSLRDASDAAVFDGLYGDASQEDYNEADYQ. A Valine amide modification is found at valine 96. The propeptide occupies 99–117; it reads SDAELRKFAHLLALQQVLD. Leucine amide is present on leucine 134. The propeptide occupies 138–155; sequence SVDAKAFSDASKGQQEFN.

It belongs to the pyrokinin family.

The protein localises to the secreted. Functionally, CAP-1 and CAP-2, but not CAP-3 are ligands for the Capa receptor. CAP-1 and CAP-2 are probably components of the signal transduction pathway that leads to Malpighian tubule fluid secretion via the second messenger nitric oxide. The protein is Cardio acceleratory peptide 2b of Drosophila pseudoobscura pseudoobscura (Fruit fly).